Consider the following 957-residue polypeptide: Glycine dehydrogenase (decarboxylating) (957 aa).

Lys708 bears the N6-(pyridoxal phosphate)lysine mark.

Belongs to the GcvP family. As to quaternary structure, the glycine cleavage system is composed of four proteins: P, T, L and H. Requires pyridoxal 5'-phosphate as cofactor.

It carries out the reaction N(6)-[(R)-lipoyl]-L-lysyl-[glycine-cleavage complex H protein] + glycine + H(+) = N(6)-[(R)-S(8)-aminomethyldihydrolipoyl]-L-lysyl-[glycine-cleavage complex H protein] + CO2. In terms of biological role, the glycine cleavage system catalyzes the degradation of glycine. The P protein binds the alpha-amino group of glycine through its pyridoxal phosphate cofactor; CO(2) is released and the remaining methylamine moiety is then transferred to the lipoamide cofactor of the H protein. The chain is Glycine dehydrogenase (decarboxylating) from Shigella boydii serotype 4 (strain Sb227).